A 664-amino-acid polypeptide reads, in one-letter code: METPSQRRATRSGAQASSTPLSPTRITRLQEKEDLQELNDRLAVYIDRVRSLETENAGLRLRITESEEVVSREVSGIKAAYEAELGDARKTLDSVAKERARLQLELSKVREEFKELKARNTKKEGDLIAAQARLKDLEALLNSKEAALSTALSEKRTLEGELHDLRGQVAKLEAALGEAKKQLQDEMLRRVDAENRLQTMKEELDFQKNIYSEELRETKRRHETRLVEIDNGKQREFESRLADALQELRAQHEDQVEQYKKELEKTYSAKLDNARQSAERNSNLVGAAHEELQQSRIRIDSLSAQLSQLQKQLAAKEAKLRDLEDSLARERDTSRRLLAEKEREMAEMRARMQQQLDEYQELLDIKLALDMEIHAYRKLLEGEEERLRLSPSPTSQRSRGRASSHSSQTQGGGSVTKKRKLESTESRSSFSQHARTSGRVAVEEVDEEGKFVRLRNKSNEDQSMGNWQIKRQNGDDPLLTYRFPPKFTLKAGQVVTIWAAGAGATHSPPTDLVWKAQNTWGCGNSLRTALINSTGEEVAMRKLVRSVTVVEDDEDEDGDDLLHHHHGSHCSSSGDPAEYNLRSRTVLCGTCGQPADKASASGSGAQVGGPISSGSSASSVTVTRSYRSVGGSGGGSFGDNLVTRSYLLGNSSPRTQSPQNCSIM.

Met1 is modified (N-acetylmethionine). Positions 1-25 are disordered; sequence METPSQRRATRSGAQASSTPLSPTR. Residues 1-33 form a head region; it reads METPSQRRATRSGAQASSTPLSPTRITRLQEKE. The tract at residues 1 to 130 is interaction with MLIP; it reads METPSQRRAT…TKKEGDLIAA (130 aa). Thr3 carries the phosphothreonine modification. Ser5 is modified (phosphoserine). The residue at position 10 (Thr10) is a Phosphothreonine. A phosphoserine mark is found at Ser12 and Ser18. The residue at position 19 (Thr19) is a Phosphothreonine. Ser22 is subject to Phosphoserine; by CDK1. Positions 31 to 387 constitute an IF rod domain; sequence EKEDLQELND…KLLEGEEERL (357 aa). Lys32 carries the N6-acetyllysine; alternate modification. Lys32 bears the N6-succinyllysine; alternate mark. Lys32 participates in a covalent cross-link: Glycyl lysine isopeptide (Lys-Gly) (interchain with G-Cter in SUMO2); alternate. A coil 1A region spans residues 34–70; it reads DLQELNDRLAVYIDRVRSLETENAGLRLRITESEEVV. 3 positions are modified to phosphoserine: Ser51, Ser66, and Ser71. The linker 1 stretch occupies residues 71 to 80; it reads SREVSGIKAA. Residues Lys78 and Lys97 each carry the N6-acetyllysine modification. The coil 1B stretch occupies residues 81–218; it reads YEAELGDARK…NIYSEELRET (138 aa). Lys97 is covalently cross-linked (Glycyl lysine isopeptide (Lys-Gly) (interchain with G-Cter in SUMO2)). Position 107 is a phosphoserine (Ser107). Residues Lys108, Lys114, Lys123, Lys135, Lys144, and Lys155 each carry the N6-acetyllysine modification. Lys171 bears the N6-acetyllysine; alternate mark. Lys171 is subject to N6-succinyllysine; alternate. Residue Lys171 forms a Glycyl lysine isopeptide (Lys-Gly) (interchain with G-Cter in SUMO2); alternate linkage. N6-acetyllysine is present on residues Lys180, Lys201, and Lys208. Lys201 is covalently cross-linked (Glycyl lysine isopeptide (Lys-Gly) (interchain with G-Cter in SUMO2); alternate). Residue Lys201 forms a Glycyl lysine isopeptide (Lys-Gly) (interchain with G-Cter in SUMO); alternate linkage. A Glycyl lysine isopeptide (Lys-Gly) (interchain with G-Cter in SUMO2) cross-link involves residue Lys208. Ser212 bears the Phosphoserine mark. Residues Lys219 and Lys233 each participate in a glycyl lysine isopeptide (Lys-Gly) (interchain with G-Cter in SUMO2) cross-link. Residues 219–242 are linker 2; sequence KRRHETRLVEIDNGKQREFESRLA. An N6-acetyllysine mark is found at Lys233, Lys260, Lys265, and Lys270. A coil 2 region spans residues 243-383; it reads DALQELRAQH…HAYRKLLEGE (141 aa). Residues 259–331 form a necessary and sufficient for the interaction with IFFO1 region; sequence YKKELEKTYS…DLEDSLARER (73 aa). Lys260 participates in a covalent cross-link: Glycyl lysine isopeptide (Lys-Gly) (interchain with G-Cter in SUMO2); alternate. Lys270 participates in a covalent cross-link: Glycyl lysine isopeptide (Lys-Gly) (interchain with G-Cter in SUMO2); alternate. The residue at position 277 (Ser277) is a Phosphoserine. Residue Ser282 is modified to Phosphoserine; by ATR. A phosphoserine mark is found at Ser301 and Ser307. Residue Lys311 forms a Glycyl lysine isopeptide (Lys-Gly) (interchain with G-Cter in SUMO2); alternate linkage. An N6-acetyllysine mark is found at Lys311, Lys316, and Lys341. Glycyl lysine isopeptide (Lys-Gly) (interchain with G-Cter in SUMO2) cross-links involve residues Lys366 and Lys378. The disordered stretch occupies residues 384–442; that stretch reads EERLRLSPSPTSQRSRGRASSHSSQTQGGGSVTKKRKLESTESRSSFSQHARTSGRVAV. Residues 384–664 are tail; the sequence is EERLRLSPSP…TQSPQNCSIM (281 aa). Phosphoserine is present on Ser390. A Phosphoserine; by CDK1 modification is found at Ser392. Ser395 carries the post-translational modification Phosphoserine; by ATR. A phosphoserine mark is found at Ser398, Ser403, Ser404, Ser406, Ser407, and Ser414. Thr416 carries the phosphothreonine modification. Lys417 is modified (N6-acetyllysine). Residues Lys417 and Lys420 each participate in a glycyl lysine isopeptide (Lys-Gly) (interchain with G-Cter in SUMO2) cross-link. The short motif at 417 to 422 is the Nuclear localization signal element; sequence KKRKLE. A phosphoserine mark is found at Ser423, Ser426, Ser429, and Ser431. A compositionally biased stretch (polar residues) spans 426–435; that stretch reads SRSSFSQHAR. In terms of domain architecture, LTD spans 428–545; sequence SSFSQHARTS…EEVAMRKLVR (118 aa). Residue Lys450 forms a Glycyl lysine isopeptide (Lys-Gly) (interchain with G-Cter in SUMO2); alternate linkage. Lys450 and Lys457 each carry N6-acetyllysine. Phosphoserine is present on residues Ser458 and Ser463. Glycyl lysine isopeptide (Lys-Gly) (interchain with G-Cter in SUMO2) cross-links involve residues Lys470 and Lys486. Lys486 is modified (N6-acetyllysine). Residues Thr496, Thr505, and Thr510 each carry the phosphothreonine modification. A phosphoserine mark is found at Ser533 and Ser546. Thr548 bears the Phosphothreonine mark. The tract at residues 552–576 is disordered; it reads DDEDEDGDDLLHHHHGSHCSSSGDP. Ser568 and Ser571 each carry phosphoserine. Lys597 is covalently cross-linked (Glycyl lysine isopeptide (Lys-Gly) (interchain with G-Cter in SUMO2); alternate). Lys597 is covalently cross-linked (Glycyl lysine isopeptide (Lys-Gly) (interchain with G-Cter in SUMO1); alternate). The interval 598–619 is disordered; the sequence is ASASGSGAQVGGPISSGSSASS. 4 positions are modified to phosphoserine: Ser612, Ser613, Ser616, and Ser619. O-linked (GlcNAc) serine glycans are attached at residues Ser625 and Ser628. Ser628, Ser632, Ser636, and Ser652 each carry phosphoserine. The propeptide at 647–661 is removed in Lamin-A/C form; sequence LLGNSSPRTQSPQNC. Cys661 bears the Cysteine methyl ester mark. Residue Cys661 is the site of S-farnesyl cysteine attachment. The propeptide at 662–664 is removed in Prelamin-A/C form and in Lamin-A/C form; sequence SIM.

This sequence belongs to the intermediate filament family. In terms of assembly, homodimer of lamin A and lamin C. Lamin dimers then assemble into dimeric head-to-tail polymers. Ultimately, two head-to-tail polymers assemble laterally into a protofilament with a uniformly shaped rod of 3.5 nm in diameter. Interacts with lamin-associated polypeptides IA, IB and TMPO-alpha, RB1 and with emerin. Interacts with SREBF1, SREBF2, SUN2 and TMEM43. Interacts with TMEM201. Proteolytically processed isoform A interacts with NARF. Interacts with SUN1. Interacts with MLIP. Interacts with DMPK; may regulate nuclear envelope stability. Interacts with SUV39H1; the interaction increases stability of SUV39H1. Interacts with SYNE2. Interacts with ITSN1 isoform 2. Interacts with IFFO1; enables the formation of an interior nucleoskeleton that is recruited to DNA double-strand breaks. As to quaternary structure, interacts with EMD. Interacts (via C-terminus) with LEMD2 (via N-terminus) (in vitro). Proteolytic cleavage of the C-terminal of 18 residues of prelamin-A/C results in the production of lamin-A/C. The prelamin-A/C maturation pathway includes farnesylation of CAAX motif by protein farnesyltransferase (FNTA and FNTB), removal of the last three amino acids (-AAX) by RCE1/FACE2 and/or ZMPSTE24, methylation of the C-terminal cysteine by ICMT and endoproteolytic removal of the last 15 C-terminal amino acids by ZMPSTE24. Proteolytic cleavage requires prior farnesylation and methylation, and absence of these blocks cleavage. In terms of processing, farnesylation of prelamin-A/C facilitates nuclear envelope targeting. Post-translationally, phosphorylation plays a key role in lamin organization, subcellular localization and nuclear envelope disintegration. Phosphorylation by CDK1 at Ser-22 and Ser-392 at the onset of mitosis drives lamin disassembly and nuclear envelope breakdown. Phosphorylation at Ser-22 and Ser-392 during interphase promotes localization to the nucleoplasm and regulates lamina assembly. Phosphorylation at Ser-22, Ser-392 and Ser-628 during interphase causes redistribution between the nucleus and the cytoplasm. Phosphorylation at Ser-22 by CDK1 regulates matrix stiffness. Phosphorylation status of Ser-22 determines its localization between double-strand break (DSB) sites and the nuclear matrix. Phosphorylated by ATR at Ser-282 in response to DNA damage, leading to lamin disassembly and nuclear envelope rupture. Phosphorylation also regulates stability in micronuclei arising from genome instability: phosphorylation at Ser-395 by ATR in response to genome instability and double-stranded DNA breaks primes LMNA for subsequent phosphorylation at Ser-392 by CDK1 and micronuclei envelope rupture. The rupture of micronuclear envelope triggers the cGAS-STING pathway thereby activating the type I interferon response and innate immunity. Acetylation by KAT8 is required for nuclear architecture. In terms of processing, sumoylation is necessary for the localization to the nuclear envelope. In the arteries, prelamin-A/C accumulation is not observed in young healthy vessels but is prevalent in medial vascular smooth muscle cells (VSMCs) from aged individuals and in atherosclerotic lesions, where it often colocalizes with senescent and degenerate VSMCs. Prelamin-A/C expression increases with age and disease. In normal aging, the accumulation of prelamin-A/C is caused in part by the down-regulation of ZMPSTE24/FACE1 in response to oxidative stress.

It localises to the nucleus lamina. The protein localises to the nucleus envelope. It is found in the nucleus. Its subcellular location is the nucleoplasm. The protein resides in the nucleus matrix. It localises to the nucleus speckle. Functionally, lamins are intermediate filament proteins that assemble into a filamentous meshwork, and which constitute the major components of the nuclear lamina, a fibrous layer on the nucleoplasmic side of the inner nuclear membrane. Lamins provide a framework for the nuclear envelope, bridging the nuclear envelope and chromatin, thereby playing an important role in nuclear assembly, chromatin organization, nuclear membrane and telomere dynamics. Lamin A and C also regulate matrix stiffness by conferring nuclear mechanical properties. The structural integrity of the lamina is strictly controlled by the cell cycle, as seen by the disintegration and formation of the nuclear envelope in prophase and telophase, respectively. Lamin A and C are present in equal amounts in the lamina of mammals. Also invoved in DNA repair: recruited by DNA repair proteins XRCC4 and IFFO1 to the DNA double-strand breaks (DSBs) to prevent chromosome translocation by immobilizing broken DNA ends. Required for normal development of peripheral nervous system and skeletal muscle and for muscle satellite cell proliferation. Required for osteoblastogenesis and bone formation. Also prevents fat infiltration of muscle and bone marrow, helping to maintain the volume and strength of skeletal muscle and bone. Required for cardiac homeostasis. Its function is as follows. Prelamin-A/C can accelerate smooth muscle cell senescence. It acts to disrupt mitosis and induce DNA damage in vascular smooth muscle cells (VSMCs), leading to mitotic failure, genomic instability, and premature senescence. The polypeptide is Prelamin-A/C (LMNA) (Homo sapiens (Human)).